The following is a 355-amino-acid chain: Spore germination protein XB (355 aa).

The next 10 membrane-spanning stretches (helical) occupy residues 2–24, 34–56, 69–91, 106–128, 135–157, 180–197, 210–232, 265–287, 299–321, and 326–348; these read VNFFQIALVLIGSTGIINHVIII, DSWISIIILSLVYIIWIPCVFIV, LMRNYGGFITYPLLSIIVLYLII, FYLPETPRILLGVLLSIICFYNI, IALTTGILLPVVFLLGFFVMIAN, GMIYPAAGFVELIFILFL, LIIVGIILAGITLGPTIAAIVEF, VYQWLVGVFIRISLVIFLIPDVL, ISILLICMVIICILPISDASFYW, and VFLPISAIGLFLFSMLLLVFVWV.

Belongs to the amino acid-polyamine-organocation (APC) superfamily. Spore germination protein (SGP) (TC 2.A.3.9) family.

The protein localises to the cell membrane. In terms of biological role, may allow B.anthracis to germinate within phagocytic cells and therefore involved in virulence. This is Spore germination protein XB (gerXB) from Bacillus anthracis.